A 637-amino-acid chain; its full sequence is Chaperone protein HtpG (637 aa).

The a; substrate-binding stretch occupies residues 1-345 (MSQQETHGFQ…SNDLPLNVSR (345 aa)). Residues 346–562 (EILQDNQVTT…EGEMSTQMIK (217 aa)) are b. The interval 563–637 (LMQAAGQPVP…TNQMLLASVK (75 aa)) is c.

It belongs to the heat shock protein 90 family. Homodimer.

The protein resides in the cytoplasm. In terms of biological role, molecular chaperone. Has ATPase activity. In Shewanella frigidimarina (strain NCIMB 400), this protein is Chaperone protein HtpG.